A 67-amino-acid polypeptide reads, in one-letter code: ATP synthase F(0) complex subunit 8 (67 aa).

The helical transmembrane segment at 8–24 (TWFITIISSMITLFILF) threads the bilayer. Residue lysine 54 is modified to N6-acetyllysine; alternate. At lysine 54 the chain carries N6-succinyllysine; alternate. Lysine 57 bears the N6-acetyllysine mark.

The protein belongs to the ATPase protein 8 family. Component of the ATP synthase complex composed at least of ATP5F1A/subunit alpha, ATP5F1B/subunit beta, ATP5MC1/subunit c (homooctomer), MT-ATP6/subunit a, MT-ATP8/subunit 8, ATP5ME/subunit e, ATP5MF/subunit f, ATP5MG/subunit g, ATP5MK/subunit k, ATP5MJ/subunit j, ATP5F1C/subunit gamma, ATP5F1D/subunit delta, ATP5F1E/subunit epsilon, ATP5PF/subunit F6, ATP5PB/subunit b, ATP5PD/subunit d, ATP5PO/subunit OSCP. ATP synthase complex consists of a soluble F(1) head domain (subunits alpha(3) and beta(3)) - the catalytic core - and a membrane F(0) domain - the membrane proton channel (subunits c, a, 8, e, f, g, k and j). These two domains are linked by a central stalk (subunits gamma, delta, and epsilon) rotating inside the F1 region and a stationary peripheral stalk (subunits F6, b, d, and OSCP). Interacts with PRICKLE3.

The protein resides in the mitochondrion membrane. Its function is as follows. Subunit 8, of the mitochondrial membrane ATP synthase complex (F(1)F(0) ATP synthase or Complex V) that produces ATP from ADP in the presence of a proton gradient across the membrane which is generated by electron transport complexes of the respiratory chain. ATP synthase complex consist of a soluble F(1) head domain - the catalytic core - and a membrane F(1) domain - the membrane proton channel. These two domains are linked by a central stalk rotating inside the F(1) region and a stationary peripheral stalk. During catalysis, ATP synthesis in the catalytic domain of F(1) is coupled via a rotary mechanism of the central stalk subunits to proton translocation. In vivo, can only synthesize ATP although its ATP hydrolase activity can be activated artificially in vitro. Part of the complex F(0) domain. The chain is ATP synthase F(0) complex subunit 8 from Mus musculus (Mouse).